Here is a 90-residue protein sequence, read N- to C-terminus: Co-chaperonin GroES (90 aa).

It belongs to the GroES chaperonin family. Heptamer of 7 subunits arranged in a ring. Interacts with the chaperonin GroEL.

The protein resides in the cytoplasm. Together with the chaperonin GroEL, plays an essential role in assisting protein folding. The GroEL-GroES system forms a nano-cage that allows encapsulation of the non-native substrate proteins and provides a physical environment optimized to promote and accelerate protein folding. GroES binds to the apical surface of the GroEL ring, thereby capping the opening of the GroEL channel. In Borreliella burgdorferi (strain ATCC 35210 / DSM 4680 / CIP 102532 / B31) (Borrelia burgdorferi), this protein is Co-chaperonin GroES.